Consider the following 314-residue polypeptide: MTRAVAEDLASSLEPDYRILHVLTTGGLEDLMDAIKTARKSEVDLLIGVGGGKPLDITKILAAELGVRYVVVPTSASHDGIASPSVSFTLSREIEERFGRVIRVEAPTAILADTTIINRASPITFKSGFGDLVAKITAVRDWELAYKLRDEPYSEYAASMSLLSAKIAMDHAHEIRTRLEESTRILVKALIGSGVAMSIAGSSRPASGSEHMFSHALDILSSEAGVKPAPHGIQVAIGTIMMAYLQGQDWKMIKEKLIEAGVPTTAEEAGISPDMIVKALTIAHKIRERYTILGSSGLTLSAAEKLARVTGVIK.

NAD(+) contacts are provided by residues 52 to 56 (GKPLD) and 74 to 77 (TSAS). Position 79 (D79) interacts with substrate. An NAD(+)-binding site is contributed by S83. D131 is a substrate binding site. D131 and H211 together coordinate Zn(2+). Position 215 (H215) interacts with substrate. H231 contributes to the Zn(2+) binding site.

The protein belongs to the glycerol-1-phosphate dehydrogenase family. Zn(2+) serves as cofactor.

The protein localises to the cytoplasm. The enzyme catalyses sn-glycerol 1-phosphate + NAD(+) = dihydroxyacetone phosphate + NADH + H(+). It carries out the reaction sn-glycerol 1-phosphate + NADP(+) = dihydroxyacetone phosphate + NADPH + H(+). It functions in the pathway membrane lipid metabolism; glycerophospholipid metabolism. Functionally, catalyzes the NAD(P)H-dependent reduction of dihydroxyacetonephosphate (DHAP or glycerone phosphate) to glycerol 1-phosphate (G1P). The G1P thus generated is used as the glycerophosphate backbone of phospholipids in the cellular membranes of Archaea. This Korarchaeum cryptofilum (strain OPF8) protein is Glycerol-1-phosphate dehydrogenase [NAD(P)+].